The following is a 740-amino-acid chain: N-acetylated-alpha-linked acidic dipeptidase 2 (740 aa).

The Cytoplasmic segment spans residues 1-7; it reads MARPRHL. The chain crosses the membrane as a helical; Signal-anchor for type II membrane protein span at residues 8 to 31; that stretch reads RGLGMCITAVLASFIAGFTVGWFI. Over 32–740 the chain is Extracellular; sequence KPLKETTTSA…AAAGTLTNVL (709 aa). Residues N111, N143, and N185 are each glycosylated (N-linked (GlcNAc...) asparagine). Substrate contacts are provided by R200 and N247. Ca(2+) contacts are provided by T259 and Y262. The segment at 264 to 577 is NAALADase; that stretch reads AKEYTFRLPV…QLRGALVYEL (314 aa). N314 carries N-linked (GlcNAc...) asparagine glycosylation. Residues H367 and D377 each coordinate Zn(2+). E414 contributes to the substrate binding site. Residue E414 is the Nucleophile; for NAALADase activity of the active site. Zn(2+) is bound at residue E415. Residues E423 and E426 each coordinate Ca(2+). Zn(2+) is bound at residue D443. N-linked (GlcNAc...) asparagine glycosylation occurs at N449. Substrate-binding positions include 507-508, 524-526, Y542, and 542-543; these read SG, RAR, and YH. Residue H543 participates in Zn(2+) binding. The N-linked (GlcNAc...) asparagine glycan is linked to N603. S618 acts as the Charge relay system in catalysis. N628 is a glycosylation site (N-linked (GlcNAc...) asparagine). Catalysis depends on charge relay system residues D656 and H679. 689 to 690 lines the substrate pocket; sequence KY.

It belongs to the peptidase M28 family. M28B subfamily. Homodimer. The cofactor is Zn(2+). As to expression, expressed ovary, testes and lung, but not brain.

Its subcellular location is the cell membrane. It catalyses the reaction Release of an unsubstituted, C-terminal glutamyl residue, typically from Ac-Asp-Glu or folylpoly-gamma-glutamates.. Its function is as follows. Has N-acetylated-alpha-linked-acidic dipeptidase (NAALADase) activity. Also exhibits a dipeptidyl-peptidase IV type activity. Inactivates the peptide neurotransmitter N-acetylaspartylglutamate. This Mus musculus (Mouse) protein is N-acetylated-alpha-linked acidic dipeptidase 2 (Naalad2).